Consider the following 186-residue polypeptide: Pyridoxal 5'-phosphate synthase subunit PdxT (186 aa).

Glycine 46 to serine 48 is a binding site for L-glutamine. Cysteine 78 acts as the Nucleophile in catalysis. Residues arginine 105 and isoleucine 134–arginine 135 contribute to the L-glutamine site. Residues histidine 170 and glutamate 172 each act as charge relay system in the active site.

It belongs to the glutaminase PdxT/SNO family. In terms of assembly, in the presence of PdxS, forms a dodecamer of heterodimers. Only shows activity in the heterodimer.

It catalyses the reaction aldehydo-D-ribose 5-phosphate + D-glyceraldehyde 3-phosphate + L-glutamine = pyridoxal 5'-phosphate + L-glutamate + phosphate + 3 H2O + H(+). The catalysed reaction is L-glutamine + H2O = L-glutamate + NH4(+). The protein operates within cofactor biosynthesis; pyridoxal 5'-phosphate biosynthesis. Functionally, catalyzes the hydrolysis of glutamine to glutamate and ammonia as part of the biosynthesis of pyridoxal 5'-phosphate. The resulting ammonia molecule is channeled to the active site of PdxS. The sequence is that of Pyridoxal 5'-phosphate synthase subunit PdxT from Clostridium acetobutylicum (strain ATCC 824 / DSM 792 / JCM 1419 / IAM 19013 / LMG 5710 / NBRC 13948 / NRRL B-527 / VKM B-1787 / 2291 / W).